The chain runs to 20 residues: XVGDLKTPAILRVTNAYLFN.

It belongs to the EF-1-beta/EF-1-delta family. In terms of processing, phosphorylated. Uterus and embryo.

The protein localises to the cytoplasm. Its subcellular location is the nucleus. Binds DNA. The sequence is that of Implantin from Mus musculus (Mouse).